The primary structure comprises 341 residues: Ribosomal RNA small subunit methyltransferase H (341 aa).

S-adenosyl-L-methionine contacts are provided by residues 47–49 (GGY), Asp-64, Phe-91, Asp-109, and Gln-116.

This sequence belongs to the methyltransferase superfamily. RsmH family.

The protein resides in the cytoplasm. It carries out the reaction cytidine(1402) in 16S rRNA + S-adenosyl-L-methionine = N(4)-methylcytidine(1402) in 16S rRNA + S-adenosyl-L-homocysteine + H(+). Its function is as follows. Specifically methylates the N4 position of cytidine in position 1402 (C1402) of 16S rRNA. The protein is Ribosomal RNA small subunit methyltransferase H of Rhizobium leguminosarum bv. trifolii (strain WSM2304).